Here is a 317-residue protein sequence, read N- to C-terminus: Eukaryotic translation initiation factor 2 subunit 2 (317 aa).

The segment at 1–146 (MSATEEENVL…KEKTITTSDG (146 aa)) is disordered. The span at 79 to 90 (AIEKLENEGAHD) shows a compositional bias: basic and acidic residues. Residues 109–125 (KSSTTTTTSTTTTTTEP) are compositionally biased toward low complexity. Residues 222 to 246 (HVYNYVFAELGTNGSIDGNQRLVIR) form a C4-type zinc finger.

It belongs to the eIF-2-beta/eIF-5 family. As to quaternary structure, eukaryotic translation initiation factor 2 eIF2 is a heterotrimeric complex composed of an alpha, a beta and a gamma subunit.

The protein resides in the cytoplasm. Its subcellular location is the cytosol. Component of the eIF2 complex that functions in the early steps of protein synthesis by forming a ternary complex with GTP and initiator tRNA. This complex binds to a 40S ribosomal subunit, followed by mRNA binding to form a 43S pre-initiation complex (43S PIC). Junction of the 60S ribosomal subunit to form the 80S initiation complex is preceded by hydrolysis of the GTP bound to eIF2 and release of an eIF2-GDP binary complex. In order for eIF2 to recycle and catalyze another round of initiation, the GDP bound to eIF2 must exchange with GTP by way of a reaction catalyzed by eIF2B. This Dictyostelium discoideum (Social amoeba) protein is Eukaryotic translation initiation factor 2 subunit 2 (eif2s2).